The chain runs to 305 residues: Putative lipid kinase SAR0780 (305 aa).

A DAGKc domain is found at Asn-3–Tyr-139. Residues Ser-44, Gly-74–Glu-80, and Thr-101 contribute to the ATP site. Mg(2+) contacts are provided by Ser-220, Asp-223, and Glu-225. The Proton acceptor role is filled by Glu-281.

This sequence belongs to the diacylglycerol/lipid kinase family. Mg(2+) serves as cofactor.

Functionally, may catalyze the ATP-dependent phosphorylation of lipids other than diacylglycerol (DAG). In fact, is not able to exhibit diacylglycerol kinase activity in vitro. The chain is Putative lipid kinase SAR0780 from Staphylococcus aureus (strain MRSA252).